The sequence spans 541 residues: FAD-linked oxidoreductase pynB (541 aa).

Residues 1–20 (MRLSARGFVWSALLACTASA) form the signal peptide. Residues Asn30, Asn57, Asn117, Asn131, Asn158, Asn253, Asn306, Asn343, Asn430, and Asn461 are each glycosylated (N-linked (GlcNAc...) asparagine). An FAD-binding PCMH-type domain is found at 71–242 (FNEFPALIAY…VDFDLQLMQF (172 aa)).

The protein belongs to the oxygen-dependent FAD-linked oxidoreductase family. It depends on FAD as a cofactor.

It participates in secondary metabolite biosynthesis. Functionally, FAD-linked oxidoreductase; part of the gene cluster that mediates the biosynthesis of pyranonigrins, a family of antioxidative compounds. The first step of pyranonigrins biosynthesis is performed by the hybrid PKS-NRPS synthetase that condenses 6 malonyl-CoA units to an acetyl starter unit, to form a 1,3,5-trioxotetradecane-6,8-dienyl-ACP. The enoyl reductase (ER) domain of pynA is likely to be functional during the first two rounds of polyketide chain extension, to generate the saturated C-C bonds of the alkyl side chain. PynA subsequently forms the amide bond between the acyl chain and L-serine. Although pynA has a terminal reductase domain, it appears to require the thioesterase pynI for the release of the straight-chain intermediate from pynA via the formation of a tetramic acid pyranonigrin J. The methyltransferase pynC then coverts pyranonigrin J to pyranonigrin I via N-methylation. The FAD-dependent monooxygenase pynG catalyzes an epoxidation-mediated cyclization to form the dihydro-gamma-pyrone moiety, followed by pynD-catalyzed oxidation of the alcohol to the ketone and enolization to yield the characteristic tetramic acid-fused gamma-pyrone core of pyranonigrin H. Pyranonigrin H is substrate of pynH for dehydration-mediated exo-methylene formation from the serine side chain to produce pyranonigrin E, before the oxidase pynE reduces the exo-methylene of pyranonigrin E into a pendant methyl to form pyranonigrin G. The FAD-linked oxidoreductase pynB performs the reverse reaction and converts pyranonigrin G back to pyranonigrin E. This chain is FAD-linked oxidoreductase pynB, found in Aspergillus niger (strain ATCC MYA-4892 / CBS 513.88 / FGSC A1513).